Consider the following 165-residue polypeptide: Ribosome maturation factor RimM (165 aa).

In terms of domain architecture, PRC barrel spans 90-161 (EDEYFIVDLV…LITIRPSGEW (72 aa)).

The protein belongs to the RimM family. In terms of assembly, binds ribosomal protein uS19.

Its subcellular location is the cytoplasm. An accessory protein needed during the final step in the assembly of 30S ribosomal subunit, possibly for assembly of the head region. Essential for efficient processing of 16S rRNA. May be needed both before and after RbfA during the maturation of 16S rRNA. It has affinity for free ribosomal 30S subunits but not for 70S ribosomes. The polypeptide is Ribosome maturation factor RimM (Clostridium perfringens (strain SM101 / Type A)).